Reading from the N-terminus, the 72-residue chain is Protein SlyX (72 aa).

The tract at residues 53-72 (KSSQSSMLARPEDETPPPHY) is disordered.

This sequence belongs to the SlyX family.

In Proteus mirabilis (strain HI4320), this protein is Protein SlyX.